We begin with the raw amino-acid sequence, 409 residues long: Pyrophosphate--fructose 6-phosphate 1-phosphotransferase (409 aa).

Gly14 is a binding site for diphosphate. Residue Asp123 participates in Mg(2+) binding. Substrate contacts are provided by residues 151 to 153 (TVD), 196 to 198 (MGR), Glu268, and 325 to 328 (YFAR). The Proton acceptor role is filled by Asp153.

This sequence belongs to the phosphofructokinase type A (PFKA) family. PPi-dependent PFK group II subfamily. Clade 'P' sub-subfamily. Homodimer. Requires Mg(2+) as cofactor.

Its subcellular location is the cytoplasm. It carries out the reaction beta-D-fructose 6-phosphate + diphosphate = beta-D-fructose 1,6-bisphosphate + phosphate + H(+). The protein operates within carbohydrate degradation; glycolysis; D-glyceraldehyde 3-phosphate and glycerone phosphate from D-glucose: step 3/4. With respect to regulation, non-allosteric. Its function is as follows. Catalyzes the phosphorylation of D-fructose 6-phosphate, the first committing step of glycolysis. Uses inorganic phosphate (PPi) as phosphoryl donor instead of ATP like common ATP-dependent phosphofructokinases (ATP-PFKs), which renders the reaction reversible, and can thus function both in glycolysis and gluconeogenesis. Consistently, PPi-PFK can replace the enzymes of both the forward (ATP-PFK) and reverse (fructose-bisphosphatase (FBPase)) reactions. In Methylomonas methanica, this protein is Pyrophosphate--fructose 6-phosphate 1-phosphotransferase.